Reading from the N-terminus, the 178-residue chain is CASP-like protein 2A2 (178 aa).

Over Met1–Ser22 the chain is Cytoplasmic. A helical membrane pass occupies residues Ala23 to Ile43. Residues Lys44 to Asn69 lie on the Extracellular side of the membrane. The chain crosses the membrane as a helical span at residues Gly70–Ile90. Residues Ser91–Arg96 lie on the Cytoplasmic side of the membrane. Residues Thr97–Ala117 form a helical membrane-spanning segment. Residues Glu118–Asn145 are Extracellular-facing. The helical transmembrane segment at Ala146 to Ile166 threads the bilayer. The Cytoplasmic portion of the chain corresponds to Ser167 to Pro178.

This sequence belongs to the Casparian strip membrane proteins (CASP) family. In terms of assembly, homodimer and heterodimers. As to expression, mostly expressed in flowers and buds and, to a lower extent, in roots and yellow siliques. Localized in the floral organ abscission zone.

Its subcellular location is the cell membrane. Its function is as follows. Involved in floral organ shedding. In Arabidopsis thaliana (Mouse-ear cress), this protein is CASP-like protein 2A2.